The chain runs to 344 residues: GTPase Obg (344 aa).

One can recognise an Obg domain in the interval 1 to 159 (MKFLDEAKVY…MWLILRLKLI (159 aa)). One can recognise an OBG-type G domain in the interval 160–327 (ADAGLVGLPN…ALRAIQAQLD (168 aa)). GTP contacts are provided by residues 166–173 (GLPNAGKS), 191–195 (FTTLH), 212–215 (DIPG), 279–282 (SKAD), and 308–310 (SAA). S173 and T193 together coordinate Mg(2+).

It belongs to the TRAFAC class OBG-HflX-like GTPase superfamily. OBG GTPase family. As to quaternary structure, monomer. The cofactor is Mg(2+).

It localises to the cytoplasm. Functionally, an essential GTPase which binds GTP, GDP and possibly (p)ppGpp with moderate affinity, with high nucleotide exchange rates and a fairly low GTP hydrolysis rate. Plays a role in control of the cell cycle, stress response, ribosome biogenesis and in those bacteria that undergo differentiation, in morphogenesis control. In Methylorubrum extorquens (strain CM4 / NCIMB 13688) (Methylobacterium extorquens), this protein is GTPase Obg.